A 585-amino-acid chain; its full sequence is Potassium-transporting ATPase potassium-binding subunit (585 aa).

The next 12 helical transmembrane spans lie at 25–45, 84–104, 152–172, 194–214, 275–295, 307–327, 345–365, 368–388, 397–417, 437–457, 502–522, and 547–567; these read IIIF…SFYI, YFIN…LVIM, FVIT…SMAF, IFDL…LAGV, LEFV…GIVF, VIMF…YVGV, AIGV…STGA, GALV…LLLN, GVLN…LMVG, LSLV…LMIP, LDGV…LVIA, and LLLI…IIVL.

It belongs to the KdpA family. As to quaternary structure, the system is composed of three essential subunits: KdpA, KdpB and KdpC.

It localises to the cell membrane. Its function is as follows. Part of the high-affinity ATP-driven potassium transport (or Kdp) system, which catalyzes the hydrolysis of ATP coupled with the electrogenic transport of potassium into the cytoplasm. This subunit binds the extracellular potassium ions and delivers the ions to the membrane domain of KdpB through an intramembrane tunnel. The polypeptide is Potassium-transporting ATPase potassium-binding subunit (Thermoplasma volcanium (strain ATCC 51530 / DSM 4299 / JCM 9571 / NBRC 15438 / GSS1)).